Reading from the N-terminus, the 254-residue chain is Thiamine thiazole synthase (254 aa).

NAD(+)-binding positions include S36, 55–56 (EK), G63, V127, and 154–156 (HVD). D156 and H171 together coordinate Fe cation. M219 contacts NAD(+). R229 is a glycine binding site.

Belongs to the THI4 family. As to quaternary structure, homooctamer; tetramer of dimers. Fe(2+) is required as a cofactor.

The enzyme catalyses hydrogen sulfide + glycine + NAD(+) = ADP-5-ethyl-4-methylthiazole-2-carboxylate + nicotinamide + 3 H2O + H(+). The protein operates within cofactor biosynthesis; thiamine diphosphate biosynthesis. Functionally, involved in the biosynthesis of the thiazole moiety of thiamine. Catalyzes the conversion of NAD and glycine to adenosine diphosphate 5-(2-hydroxyethyl)-4-methylthiazole-2-carboxylate (ADT), an adenylated thiazole intermediate, using free sulfide as a source of sulfur. The chain is Thiamine thiazole synthase from Methanoculleus marisnigri (strain ATCC 35101 / DSM 1498 / JR1).